The following is a 420-amino-acid chain: 3-isopropylmalate dehydratase large subunit (420 aa).

Positions 300, 360, and 363 each coordinate [4Fe-4S] cluster.

This sequence belongs to the aconitase/IPM isomerase family. LeuC type 2 subfamily. Heterodimer of LeuC and LeuD. [4Fe-4S] cluster is required as a cofactor.

The catalysed reaction is (2R,3S)-3-isopropylmalate = (2S)-2-isopropylmalate. Its pathway is amino-acid biosynthesis; L-leucine biosynthesis; L-leucine from 3-methyl-2-oxobutanoate: step 2/4. Functionally, catalyzes the isomerization between 2-isopropylmalate and 3-isopropylmalate, via the formation of 2-isopropylmaleate. The chain is 3-isopropylmalate dehydratase large subunit from Heliobacterium modesticaldum (strain ATCC 51547 / Ice1).